We begin with the raw amino-acid sequence, 488 residues long: Glutamate synthase [NADPH] small chain (488 aa).

In terms of domain architecture, 4Fe-4S ferredoxin-type spans 38–69 (ESLRQQATRCMDCGIPFCHNGCPLGNLIPEWN).

[4Fe-4S] cluster is required as a cofactor.

It catalyses the reaction 2 L-glutamate + NADP(+) = L-glutamine + 2-oxoglutarate + NADPH + H(+). It functions in the pathway amino-acid biosynthesis; L-glutamate biosynthesis via GLT pathway; L-glutamate from 2-oxoglutarate and L-glutamine (NADP(+) route): step 1/1. This is Glutamate synthase [NADPH] small chain (gltD) from Mycobacterium tuberculosis (strain CDC 1551 / Oshkosh).